The sequence spans 899 residues: Alanine--tRNA ligase, chloroplastic/mitochondrial (899 aa).

The Zn(2+) site is built by His-581, His-585, Cys-683, and His-687.

It belongs to the class-II aminoacyl-tRNA synthetase family. As to quaternary structure, monomer. Zn(2+) is required as a cofactor.

The protein resides in the plastid. Its subcellular location is the chloroplast. It is found in the mitochondrion. The catalysed reaction is tRNA(Ala) + L-alanine + ATP = L-alanyl-tRNA(Ala) + AMP + diphosphate. Catalyzes the attachment of alanine to tRNA(Ala) in a two-step reaction: alanine is first activated by ATP to form Ala-AMP and then transferred to the acceptor end of tRNA(Ala). Also edits incorrectly charged tRNA(Ala) via its editing domain. This is Alanine--tRNA ligase, chloroplastic/mitochondrial from Micromonas pusilla (strain CCMP1545) (Picoplanktonic green alga).